Here is a 32-residue protein sequence, read N- to C-terminus: DNA-binding protein HU (32 aa).

The protein belongs to the bacterial histone-like protein family.

Its function is as follows. Histone-like DNA-binding protein which is capable of wrapping DNA to stabilize it, and thus to prevent its denaturation under extreme environmental conditions. The protein is DNA-binding protein HU (hup) of Synechocystis sp. (strain PCC 6701).